The chain runs to 101 residues: Small ribosomal subunit protein uS14 (101 aa).

The segment covering 1–10 has biased composition (basic and acidic residues); the sequence is MAKKSAIEKN. A disordered region spans residues 1–23; sequence MAKKSAIEKNNRRKKMTKNAAPK. Residues 11 to 23 are compositionally biased toward basic residues; that stretch reads NRRKKMTKNAAPK.

It belongs to the universal ribosomal protein uS14 family. As to quaternary structure, part of the 30S ribosomal subunit. Contacts proteins S3 and S10.

In terms of biological role, binds 16S rRNA, required for the assembly of 30S particles and may also be responsible for determining the conformation of the 16S rRNA at the A site. In Rhodopseudomonas palustris (strain TIE-1), this protein is Small ribosomal subunit protein uS14.